We begin with the raw amino-acid sequence, 289 residues long: 4-hydroxy-tetrahydrodipicolinate synthase (289 aa).

Threonine 42 serves as a coordination point for pyruvate. Tyrosine 129 (proton donor/acceptor) is an active-site residue. Lysine 157 serves as the catalytic Schiff-base intermediate with substrate. Isoleucine 198 lines the pyruvate pocket.

It belongs to the DapA family. Homotetramer; dimer of dimers.

It localises to the cytoplasm. The catalysed reaction is L-aspartate 4-semialdehyde + pyruvate = (2S,4S)-4-hydroxy-2,3,4,5-tetrahydrodipicolinate + H2O + H(+). Its pathway is amino-acid biosynthesis; L-lysine biosynthesis via DAP pathway; (S)-tetrahydrodipicolinate from L-aspartate: step 3/4. Its function is as follows. Catalyzes the condensation of (S)-aspartate-beta-semialdehyde [(S)-ASA] and pyruvate to 4-hydroxy-tetrahydrodipicolinate (HTPA). In Chlamydia caviae (strain ATCC VR-813 / DSM 19441 / 03DC25 / GPIC) (Chlamydophila caviae), this protein is 4-hydroxy-tetrahydrodipicolinate synthase.